The sequence spans 454 residues: Sensor histidine kinase RppB (454 aa).

Over 1–13 (MNTRRLFARSRLQ) the chain is Periplasmic. The helical transmembrane segment at 14-34 (LAFWYALVMGGILTLLGLGVY) threads the bilayer. Residues 35–186 (RAIVQANWMA…LAAFDAENKR (152 aa)) lie on the Cytoplasmic side of the membrane. The helical transmembrane segment at 187–207 (ILWILGLSFPIALGLVAFSSW) threads the bilayer. Topologically, residues 208-454 (GLAGLAMRPI…PIFSVPIVHS (247 aa)) are periplasmic. A Histidine kinase domain is found at 230–448 (NAAHELRSPL…LFTIQLPIFS (219 aa)). H233 bears the Phosphohistidine; by autocatalysis mark.

It localises to the cell inner membrane. It catalyses the reaction ATP + protein L-histidine = ADP + protein N-phospho-L-histidine.. Member of two-component regulatory system RppA/RppB, involved in the establishment of the appropriate stoichiometry between the 2 photosystems. It senses changes in the plastoquinone (PQ) redox poise. Another group shows this two-component pair, renamed NrsR/NrsS, controls the nickel-dependent expression of the nrsBACD operon; they suggest the photosystem-related activities seen earlier are due to the expression of NrsS (RppB) in the absence of its natural substrate NrsR (RppA). The polypeptide is Sensor histidine kinase RppB (Synechocystis sp. (strain ATCC 27184 / PCC 6803 / Kazusa)).